Consider the following 315-residue polypeptide: Methionyl-tRNA formyltransferase (315 aa).

112–115 serves as a coordination point for (6S)-5,6,7,8-tetrahydrofolate; that stretch reads SLLP.

It belongs to the Fmt family.

It carries out the reaction L-methionyl-tRNA(fMet) + (6R)-10-formyltetrahydrofolate = N-formyl-L-methionyl-tRNA(fMet) + (6S)-5,6,7,8-tetrahydrofolate + H(+). Its function is as follows. Attaches a formyl group to the free amino group of methionyl-tRNA(fMet). The formyl group appears to play a dual role in the initiator identity of N-formylmethionyl-tRNA by promoting its recognition by IF2 and preventing the misappropriation of this tRNA by the elongation apparatus. In Rhizobium rhizogenes (strain K84 / ATCC BAA-868) (Agrobacterium radiobacter), this protein is Methionyl-tRNA formyltransferase.